Here is a 156-residue protein sequence, read N- to C-terminus: ATP synthase subunit b (156 aa).

A helical membrane pass occupies residues 4 to 26 (GATFWGPMISFALFVWFTMKYVW).

It belongs to the ATPase B chain family. F-type ATPases have 2 components, F(1) - the catalytic core - and F(0) - the membrane proton channel. F(1) has five subunits: alpha(3), beta(3), gamma(1), delta(1), epsilon(1). F(0) has three main subunits: a(1), b(2) and c(10-14). The alpha and beta chains form an alternating ring which encloses part of the gamma chain. F(1) is attached to F(0) by a central stalk formed by the gamma and epsilon chains, while a peripheral stalk is formed by the delta and b chains.

It is found in the cell inner membrane. F(1)F(0) ATP synthase produces ATP from ADP in the presence of a proton or sodium gradient. F-type ATPases consist of two structural domains, F(1) containing the extramembraneous catalytic core and F(0) containing the membrane proton channel, linked together by a central stalk and a peripheral stalk. During catalysis, ATP synthesis in the catalytic domain of F(1) is coupled via a rotary mechanism of the central stalk subunits to proton translocation. Its function is as follows. Component of the F(0) channel, it forms part of the peripheral stalk, linking F(1) to F(0). In Alkalilimnicola ehrlichii (strain ATCC BAA-1101 / DSM 17681 / MLHE-1), this protein is ATP synthase subunit b.